Reading from the N-terminus, the 753-residue chain is 5-methyltetrahydropteroyltriglutamate--homocysteine methyltransferase (753 aa).

5-methyltetrahydropteroyltri-L-glutamate-binding positions include 17 to 20 (RELK) and K117. L-homocysteine contacts are provided by residues 431 to 433 (IGS) and E484. L-methionine-binding positions include 431–433 (IGS) and E484. 5-methyltetrahydropteroyltri-L-glutamate-binding positions include 515 to 516 (RC) and W561. D599 is a binding site for L-homocysteine. Residue D599 participates in L-methionine binding. E605 is a 5-methyltetrahydropteroyltri-L-glutamate binding site. Positions 641, 643, and 665 each coordinate Zn(2+). H694 (proton donor) is an active-site residue. C726 is a binding site for Zn(2+).

This sequence belongs to the vitamin-B12 independent methionine synthase family. Monomer. It depends on Zn(2+) as a cofactor.

It catalyses the reaction 5-methyltetrahydropteroyltri-L-glutamate + L-homocysteine = tetrahydropteroyltri-L-glutamate + L-methionine. The protein operates within amino-acid biosynthesis; L-methionine biosynthesis via de novo pathway; L-methionine from L-homocysteine (MetE route): step 1/1. Catalyzes the transfer of a methyl group from 5-methyltetrahydrofolate to homocysteine resulting in methionine formation. This chain is 5-methyltetrahydropteroyltriglutamate--homocysteine methyltransferase, found in Escherichia coli (strain K12).